We begin with the raw amino-acid sequence, 137 residues long: GEL complex subunit OPTI (137 aa).

Residues 1 to 44 (MSGGRRKEEPPQPQLANGALKVSVWSKVLRSDAAWEDKDEFLDV) lie on the Cytoplasmic side of the membrane. A helical transmembrane segment spans residues 45–65 (IYWFRQIIAVVLGVIWGVLPL). Residue R66 is a topological domain, lumenal. A helical membrane pass occupies residues 67-84 (GFLGIAGFCLINAGVLYL). At 85–103 (YFSNYLQIDEEEYGGTWEL) the chain is on the cytoplasmic side. Residues 104–127 (TKEGFMTSFALFMVCVADSFTTGH) traverse the membrane as a helical segment. Over 128–137 (LDHLLHCHPL) the chain is Lumenal.

This sequence belongs to the EMC6 family. In terms of assembly, component of the GET- and EMC-like (GEL) complex, composed of RAB5IF/OPTI and TMCO1. The GEL complex is part of the multi-pass translocon (MPT) complex, composed of three subcomplexes, the GEL complex (composed of RAB5IF/OPTI and TMCO1), the BOS complex (composed of NCLN/Nicalin, NOMO and TMEM147) and the PAT complex (composed of WDR83OS/Asterix and CCDC47). The MPT complex associates with the SEC61 complex. Interacts with NDUFS3, NDUFA4, NDUFV1, NDUFA9 and NDUFS8 of the mitochondrial membrane respiratory chain NADH dehydrogenase (Complex I). Interacts with UQCRC2 of the ubiquinol-cytochrome c reductase complex (Complex III). Interacts with COX5A and COX7C of the cytochrome c oxidase complex (Complex IV). In terms of tissue distribution, expressed in embryonic stem cells and differentiated neuronal cells.

Its subcellular location is the endoplasmic reticulum membrane. It localises to the mitochondrion inner membrane. Component of the multi-pass translocon (MPT) complex that mediates insertion of multi-pass membrane proteins into the lipid bilayer of membranes. The MPT complex takes over after the SEC61 complex: following membrane insertion of the first few transmembrane segments of proteins by the SEC61 complex, the MPT complex occludes the lateral gate of the SEC61 complex to promote insertion of subsequent transmembrane regions. Within the MPT complex, the GEL subcomplex may mediate insertion of transmembrane regions into the membrane. In addition to its role in multi-pass membrane insertion, RAB5IF/OPTI also acts as an assembly factor for mitochondrial respiratory complexes. In Homo sapiens (Human), this protein is GEL complex subunit OPTI.